The chain runs to 406 residues: NIPA-like protein 3 (406 aa).

The next 4 helical transmembrane spans lie at 33-53, 76-96, 101-121, and 135-155; these read NLIG…ALNL, WWLG…SYAF, LIVP…IIFI, and ILSF…VTFA. N-linked (GlcNAc...) asparagine glycosylation occurs at N166. The next 5 helical transmembrane spans lie at 171–191, 202–222, 240–260, 271–291, and 300–320; these read LVSW…CLLL, IVVI…TVKA, PIFY…AAFL, LIAS…GAIF, and VLHI…VFLI. The residue at position 372 (S372) is a Phosphoserine.

Belongs to the NIPA family.

It localises to the membrane. This Pongo abelii (Sumatran orangutan) protein is NIPA-like protein 3 (NIPAL3).